A 257-amino-acid polypeptide reads, in one-letter code: NAD-dependent protein deacetylase (257 aa).

Residues 3-252 enclose the Deacetylase sirtuin-type domain; the sequence is NGECLEGGRK…DLVLNEVKGI (250 aa). Residues alanine 29, threonine 33, phenylalanine 40, arginine 41, glutamine 105, isoleucine 107, aspartate 108, and histidine 123 each coordinate NAD(+). Phenylalanine 40 lines the nicotinamide pocket. Nicotinamide-binding residues include isoleucine 107 and aspartate 108. The active-site Proton acceptor is histidine 123. Zn(2+)-binding residues include cysteine 131, cysteine 134, cysteine 156, and cysteine 159. NAD(+) contacts are provided by serine 195, serine 196, and asparagine 220.

This sequence belongs to the sirtuin family. Class U subfamily. Requires Zn(2+) as cofactor.

It is found in the cytoplasm. It catalyses the reaction N(6)-acetyl-L-lysyl-[protein] + NAD(+) + H2O = 2''-O-acetyl-ADP-D-ribose + nicotinamide + L-lysyl-[protein]. Its function is as follows. NAD-dependent protein deacetylase which modulates the activities of several enzymes which are inactive in their acetylated form. Deacetylates the N-terminal lysine residue of Alba, the major archaeal chromatin protein and that, in turn, increases Alba's DNA binding affinity, thereby repressing transcription. The polypeptide is NAD-dependent protein deacetylase (Caldivirga maquilingensis (strain ATCC 700844 / DSM 13496 / JCM 10307 / IC-167)).